Reading from the N-terminus, the 157-residue chain is 17.8 kDa class I heat shock protein (157 aa).

The region spanning E41–S156 is the sHSP domain.

This sequence belongs to the small heat shock protein (HSP20) family. As to quaternary structure, homodimer under normal physiological conditions. Aggregates in high oligomeric complexes after heat shock. Binds to AKR2A and to chloroplasts. In terms of tissue distribution, expressed ubiquitously at low levels under normal physiological conditions.

It is found in the cytoplasm. Its function is as follows. Cytosolic mediator for sorting and targeting of nascent chloroplast outer envelope membrane (OEM) proteins to the chloroplast. Functions as an AKR2A cofactor to facilitate the targeting of OEP7 to chloroplasts. This chain is 17.8 kDa class I heat shock protein (HSP17.8), found in Arabidopsis thaliana (Mouse-ear cress).